Reading from the N-terminus, the 404-residue chain is S-adenosylmethionine synthase (404 aa).

Position 18 (histidine 18) interacts with ATP. Aspartate 20 is a binding site for Mg(2+). Glutamate 46 provides a ligand contact to K(+). Residues glutamate 59 and glutamine 102 each coordinate L-methionine. A flexible loop region spans residues 102–112; that stretch reads QSPEIAQGVDH. ATP contacts are provided by residues 178-180, 249-250, aspartate 258, 264-265, alanine 281, and lysine 285; these read DGK, KF, and RK. Aspartate 258 contributes to the L-methionine binding site. L-methionine is bound at residue lysine 289.

Belongs to the AdoMet synthase family. In terms of assembly, homotetramer; dimer of dimers. Mg(2+) serves as cofactor. K(+) is required as a cofactor.

The protein resides in the cytoplasm. It catalyses the reaction L-methionine + ATP + H2O = S-adenosyl-L-methionine + phosphate + diphosphate. The protein operates within amino-acid biosynthesis; S-adenosyl-L-methionine biosynthesis; S-adenosyl-L-methionine from L-methionine: step 1/1. In terms of biological role, catalyzes the formation of S-adenosylmethionine (AdoMet) from methionine and ATP. The overall synthetic reaction is composed of two sequential steps, AdoMet formation and the subsequent tripolyphosphate hydrolysis which occurs prior to release of AdoMet from the enzyme. The protein is S-adenosylmethionine synthase of Rhodococcus jostii (strain RHA1).